The following is a 389-amino-acid chain: Agamous-like MADS-box protein AGL65 (389 aa).

In terms of domain architecture, MADS-box spans 1–61 (MGRVKLKIKR…GRATAFHGEH (61 aa)). Coiled-coil stretches lie at residues 77-131 (QERT…LMEC) and 293-325 (GMEE…QQQD). Residues 310-343 (NLQQQQQQQQQQQQQDPSMYDPMANNNGGCFQIP) are disordered. A compositionally biased stretch (low complexity) spans 312–324 (QQQQQQQQQQQQQ).

Forms a heterodimer with AGL104. As to expression, expressed in pollen.

It is found in the nucleus. Its function is as follows. Probable transcription factor that forms a heterodimer with the MADS-box protein AGL104 and is involved in the regulation of pollen maturation at the late stages of pollen development and pollen tube growth. The protein is Agamous-like MADS-box protein AGL65 of Arabidopsis thaliana (Mouse-ear cress).